The sequence spans 395 residues: Polar tube protein 1 (395 aa).

Residues 1 to 22 (MKGISKILSASIALMKLENVYS) form the signal peptide. Disordered regions lie at residues 59 to 95 (CASG…APAE) and 111 to 133 (PGTT…QQPL). The segment covering 68 to 80 (SPSPAAPTSPVTP) has biased composition (low complexity). Residues 81–91 (GKTSENETSPS) are compositionally biased toward polar residues. Asparagine 86 is a glycosylation site (N-linked (GlcNAc...) asparagine). A compositionally biased stretch (low complexity) spans 111–128 (PGTTSGTTPGSGPCETPE). Asparagine 173 carries N-linked (GlcNAc...) asparagine glycosylation. A run of 4 repeats spans residues 179–204 (PGQQ…MPST), 205–230 (PGQQ…TPST), 231–256 (PGQQ…TPST), and 257–282 (PGQQ…MPGT). Positions 179–282 (PGQQQILSGT…LCQDQGMPGT (104 aa)) are 4 X 26 AA approximate tandem repeats. The segment at 277–300 (QGMPGTSGVPGQQGQSSGQCCAPQ) is disordered. Positions 280-300 (PGTSGVPGQQGQSSGQCCAPQ) are enriched in low complexity. An N-linked (GlcNAc...) asparagine glycan is attached at asparagine 311.

Interacts with PTP2 and PTP3.

Its subcellular location is the spore polar tube. Its function is as follows. Involved with PTP2 and PTP3 in the formation of the polar tube through which the infectious agent is passed on to the host cell. Accounts for at least 70 percent of the mass of the polar tube. The chain is Polar tube protein 1 (PTP1) from Encephalitozoon cuniculi (strain GB-M1) (Microsporidian parasite).